Consider the following 132-residue polypeptide: Small ribosomal subunit protein uS8 (132 aa).

This sequence belongs to the universal ribosomal protein uS8 family. As to quaternary structure, part of the 30S ribosomal subunit. Contacts proteins S5 and S12.

Functionally, one of the primary rRNA binding proteins, it binds directly to 16S rRNA central domain where it helps coordinate assembly of the platform of the 30S subunit. In Flavobacterium psychrophilum (strain ATCC 49511 / DSM 21280 / CIP 103535 / JIP02/86), this protein is Small ribosomal subunit protein uS8.